A 102-amino-acid chain; its full sequence is Large ribosomal subunit protein uL24 (102 aa).

It belongs to the universal ribosomal protein uL24 family. As to quaternary structure, part of the 50S ribosomal subunit.

Its function is as follows. One of two assembly initiator proteins, it binds directly to the 5'-end of the 23S rRNA, where it nucleates assembly of the 50S subunit. Functionally, one of the proteins that surrounds the polypeptide exit tunnel on the outside of the subunit. This chain is Large ribosomal subunit protein uL24, found in Burkholderia ambifaria (strain ATCC BAA-244 / DSM 16087 / CCUG 44356 / LMG 19182 / AMMD) (Burkholderia cepacia (strain AMMD)).